The sequence spans 740 residues: Ion-translocating oxidoreductase complex subunit C (740 aa).

2 consecutive 4Fe-4S ferredoxin-type domains span residues 369 to 397 (GEPQEEQSCIRCSACADACPADLLPQQLY) and 407 to 436 (KATTHNIADCIECGACAWVCPSNIPLVQYF). [4Fe-4S] cluster contacts are provided by Cys-377, Cys-380, Cys-383, Cys-387, Cys-416, Cys-419, Cys-422, and Cys-426. A disordered region spans residues 602-716 (KLEQQQANAE…EPEEQVDPRK (115 aa)).

The protein belongs to the 4Fe4S bacterial-type ferredoxin family. RnfC subfamily. As to quaternary structure, the complex is composed of six subunits: RsxA, RsxB, RsxC, RsxD, RsxE and RsxG. Requires [4Fe-4S] cluster as cofactor.

It is found in the cell inner membrane. Its function is as follows. Part of a membrane-bound complex that couples electron transfer with translocation of ions across the membrane. Required to maintain the reduced state of SoxR. This chain is Ion-translocating oxidoreductase complex subunit C, found in Escherichia coli (strain SE11).